A 450-amino-acid chain; its full sequence is Phosphoglucosamine mutase 2 (450 aa).

The Phosphoserine intermediate role is filled by Ser-101. 4 residues coordinate Mg(2+): Ser-101, Asp-245, Asp-247, and Asp-249. Phosphoserine is present on Ser-101.

The protein belongs to the phosphohexose mutase family. The cofactor is Mg(2+). Activated by phosphorylation.

The enzyme catalyses alpha-D-glucosamine 1-phosphate = D-glucosamine 6-phosphate. In terms of biological role, catalyzes the conversion of glucosamine-6-phosphate to glucosamine-1-phosphate. This Shewanella sp. (strain MR-4) protein is Phosphoglucosamine mutase 2.